We begin with the raw amino-acid sequence, 41 residues long: Large ribosomal subunit protein bL36 (41 aa).

The protein belongs to the bacterial ribosomal protein bL36 family.

In Jannaschia sp. (strain CCS1), this protein is Large ribosomal subunit protein bL36.